The chain runs to 205 residues: Syndecan 4-B (205 aa).

The signal sequence occupies residues 1-17 (MNRLLLLLALVLSGVAA). The Extracellular segment spans residues 18-162 (ESIRETETMD…FFQRTEVIVA (145 aa)). Positions 26 to 113 (MDPTSMLEYE…HDFDETKTGR (88 aa)) are disordered. 3 O-linked (Xyl...) (glycosaminoglycan) serine glycosylation sites follow: Ser37, Ser73, and Ser75. The span at 44–94 (VFVDEDDDDDYEDGVDYEIDSESDNDEDYSGSGDDDFDDEDNVEDEDEEET) shows a compositional bias: acidic residues. A compositionally biased stretch (basic and acidic residues) spans 102-113 (PEHDFDETKTGR). Residues 163–183 (IIAGTLVGLVVAVSFIVFLVI) traverse the membrane as a helical segment. The Cytoplasmic portion of the chain corresponds to 184–205 (RRNQNGDLVKKPIYKKTSTMEV).

It belongs to the syndecan proteoglycan family. Interacts with the Wnt receptor fzd7 and its signal transducer dvl2/dsh. In terms of processing, O-glycosylated; contains both chondroitin sulfate and heparan sulfate. Ser-37, Ser-73 and Ser-75 can all be modified by either chondroitin sulfate or heparan sulfate, and the protein exists in forms that contain only chondroitin sulfate, only heparan sulfate and both chondroitin sulfate and heparan sulfate. Expressed in the animal hemisphere from the 4-cell to the blastula stage. During gastrulation, expressed in the involuting dorsal mesoderm and ectoderm. After involution, localized mainly to the anterior neuroectoderm. At later stages, expressed in the brain, branchial arches, pronephros, tailbud, and at low levels in the somites.

It is found in the membrane. Its function is as follows. Cell surface proteoglycan. Regulates non-canonical Wnt signaling, being necessary and sufficient for fibronectrin-mediated translocation of dvl2/dsh to the plasma membrane. Required for proper convergent extension movements during gastrulation, which shape the neural plate, and for subsequent neural tube closure. The polypeptide is Syndecan 4-B (sdc4-b) (Xenopus laevis (African clawed frog)).